Here is a 312-residue protein sequence, read N- to C-terminus: Putative olfactory receptor 1F2 (312 aa).

The Extracellular segment spans residues 1 to 25 (MERDKPVSVSEFLLLGLSRQPQQQH). The chain crosses the membrane as a helical span at residues 26–49 (LLFVFFLSMYLATVLGNLLIILAI). The Cytoplasmic portion of the chain corresponds to 50–57 (SIDSRLHT). The chain crosses the membrane as a helical span at residues 58-78 (PMYFFLSNMSFVDNCFSTTVP). Topologically, residues 79–99 (KMLANHILRTQTISFSGCLMQ) are extracellular. A disulfide bond links Cys96 and Cys188. Residues 100–119 (MYFISELADMDNFLLAVMAY) traverse the membrane as a helical segment. Residues 120–138 (DRFVAVCRPLHYTAKMIHQ) lie on the Cytoplasmic side of the membrane. The helical transmembrane segment at 139 to 157 (LCALLVTGSWVVANSNALL) threads the bilayer. Over 158–195 (HTLLMARLSFCADNTIPHIFCDVTPLLKLSCSDTHLSE) the chain is Extracellular. The chain crosses the membrane as a helical span at residues 196-218 (VMILTEAALVTITPFLCLLASYM). The Cytoplasmic segment spans residues 219 to 235 (HITCVVLRVPSTKGRWK). A helical transmembrane segment spans residues 236 to 258 (AFSTCGSHLAVVLLFYGTIMSPY). The Extracellular segment spans residues 259–271 (FRTSSSHSAQRDI). Residues 272-291 (AAAVRFTVVTPVMNPLIYSL) traverse the membrane as a helical segment. Residues 292–312 (RNKDIKGALVKVVAVKFFSVQ) lie on the Cytoplasmic side of the membrane.

Belongs to the G-protein coupled receptor 1 family.

The protein resides in the cell membrane. Odorant receptor. The polypeptide is Putative olfactory receptor 1F2 (OR1F2P) (Homo sapiens (Human)).